A 283-amino-acid chain; its full sequence is ATP phosphoribosyltransferase (283 aa).

Belongs to the ATP phosphoribosyltransferase family. Long subfamily. It depends on Mg(2+) as a cofactor.

The protein resides in the cytoplasm. It catalyses the reaction 1-(5-phospho-beta-D-ribosyl)-ATP + diphosphate = 5-phospho-alpha-D-ribose 1-diphosphate + ATP. Its pathway is amino-acid biosynthesis; L-histidine biosynthesis; L-histidine from 5-phospho-alpha-D-ribose 1-diphosphate: step 1/9. Feedback inhibited by histidine. In terms of biological role, catalyzes the condensation of ATP and 5-phosphoribose 1-diphosphate to form N'-(5'-phosphoribosyl)-ATP (PR-ATP). Has a crucial role in the pathway because the rate of histidine biosynthesis seems to be controlled primarily by regulation of HisG enzymatic activity. In Parabacteroides distasonis (strain ATCC 8503 / DSM 20701 / CIP 104284 / JCM 5825 / NCTC 11152), this protein is ATP phosphoribosyltransferase.